The following is a 418-amino-acid chain: MAKLLQSPPKFLPAEWYIANKSQYHRAEAQRSRSERLVAESQRLVEEIEKTTRKSQSDVNKKLEQRLEEVKFWKKELDDKLEHLVNETEDLLTYKIRLERSLESYKEPLHITEKCLAYREKRVGIDLVHDVVDQELQKEADIIHGVMNLLTRTVEEATEQIRLNRSAKYNLEKDLKDKFTAITIDDICFSLNNNSPDIKYSENVVRIEPNSVSLEDWLDFSNTNMQKADKQLNNSMALKTLVDQILSQTANDLRRQCEVVDTAFVNGLKETKDARNKLADHLAKVMDEIASQEKNIEVLENAITQQEGPAKVAHTRLENRTYRPNVELCRDVAQYRLIREVQEIKHNVARLEETLAQAQIQLKALFRRQLALQEEIQVKENTIYIDQVLCMEMRKSIPPRDGDDHGAWEGGIRAEAIC.

4 coiled-coil regions span residues asparagine 20–glutamate 107, glutamine 134–aspartate 177, asparagine 266–glycine 308, and valine 332–isoleucine 383.

It belongs to the tektin family. In terms of assembly, microtubule inner protein component of sperm flagellar doublet microtubules. In terms of processing, ubiquitinated, leading to its degradation. Deubiquitinated by USP16, promoting its stability. As to expression, predominantly expressed in testis.

The protein resides in the cytoplasm. The protein localises to the cytoskeleton. Its subcellular location is the cilium axoneme. It localises to the flagellum axoneme. Functionally, microtubule inner protein (MIP) part of the dynein-decorated doublet microtubules (DMTs) in cilia and flagellar axoneme. Forms filamentous polymers in the walls of ciliary and flagellar microtubules. The chain is Tektin-1 (Tekt1) from Rattus norvegicus (Rat).